Consider the following 208-residue polypeptide: Small ribosomal subunit protein eS8 (208 aa).

The interval 1 to 37 (MGISRDNWHKRRKTGGKRKPYHKKRKYEPGRPAANTK) is disordered. The segment covering 8–26 (WHKRRKTGGKRKPYHKKRK) has biased composition (basic residues).

It belongs to the eukaryotic ribosomal protein eS8 family. As to quaternary structure, component of the small ribosomal subunit. Identified in a IGF2BP1-dependent mRNP granule complex containing untranslated mRNAs. Part of the small subunit (SSU) processome, composed of more than 70 proteins and the RNA chaperone small nucleolar RNA (snoRNA) U3.

It localises to the cytoplasm. The protein localises to the membrane. It is found in the nucleus. The protein resides in the nucleolus. Its function is as follows. Component of the small ribosomal subunit. The ribosome is a large ribonucleoprotein complex responsible for the synthesis of proteins in the cell. Part of the small subunit (SSU) processome, first precursor of the small eukaryotic ribosomal subunit. During the assembly of the SSU processome in the nucleolus, many ribosome biogenesis factors, an RNA chaperone and ribosomal proteins associate with the nascent pre-rRNA and work in concert to generate RNA folding, modifications, rearrangements and cleavage as well as targeted degradation of pre-ribosomal RNA by the RNA exosome. This chain is Small ribosomal subunit protein eS8 (rps8), found in Xenopus laevis (African clawed frog).